Here is a 71-residue protein sequence, read N- to C-terminus: Small ribosomal subunit protein bS21 (71 aa).

Over residues 48 to 59 (KAAAAVKRHAKK) the composition is skewed to basic residues. The interval 48–71 (KAAAAVKRHAKKVQRENRKFQRLY) is disordered. The span at 60 to 71 (VQRENRKFQRLY) shows a compositional bias: basic and acidic residues.

The protein belongs to the bacterial ribosomal protein bS21 family.

In Teredinibacter turnerae (strain ATCC 39867 / T7901), this protein is Small ribosomal subunit protein bS21.